A 201-amino-acid chain; its full sequence is Phospholipase D (201 aa).

Positions 1–25 (MKRKNKKFTEIFIAFILGIAIGVLG) are cleaved as a signal peptide. Residues 142-169 (VPGIAHNKVIIIDKKKVITGSFNFTAAA) enclose the PLD phosphodiesterase domain. Catalysis depends on residues H147, K149, and D154.

This sequence belongs to the phospholipase D family. Homodimer.

It is found in the secreted. It carries out the reaction a 1,2-diacyl-sn-glycero-3-phosphocholine + H2O = a 1,2-diacyl-sn-glycero-3-phosphate + choline + H(+). In terms of biological role, could be a virulence factor. This Rickettsia bellii (strain RML369-C) protein is Phospholipase D (pld).